A 123-amino-acid chain; its full sequence is Small ribosomal subunit protein bS6 (123 aa).

Positions 102–123 are disordered; sequence MLKQKEERAPRREAEAKEFAAE. The segment covering 104 to 123 has biased composition (basic and acidic residues); it reads KQKEERAPRREAEAKEFAAE.

It belongs to the bacterial ribosomal protein bS6 family.

Functionally, binds together with bS18 to 16S ribosomal RNA. In Vibrio vulnificus (strain CMCP6), this protein is Small ribosomal subunit protein bS6.